Reading from the N-terminus, the 271-residue chain is Octanoyltransferase LipM (271 aa).

Residues 31–242 (GHNKPTLRFY…GLAEQFNVEF (212 aa)) form the BPL/LPL catalytic domain. The active-site Acyl-thioester intermediate is Cys-144.

This sequence belongs to the octanoyltransferase LipM family. Monomer.

It catalyses the reaction octanoyl-[ACP] + L-lysyl-[protein] = N(6)-octanoyl-L-lysyl-[protein] + holo-[ACP] + H(+). The protein operates within protein modification; protein lipoylation via endogenous pathway; protein N(6)-(lipoyl)lysine from octanoyl-[acyl-carrier-protein]. Its function is as follows. Catalyzes the transfer of endogenously produced octanoic acid from octanoyl-acyl-carrier-protein onto the lipoyl domain of GcvH, an intermediate carrier during protein lipoylation. The protein is Octanoyltransferase LipM of Clostridioides difficile (strain 630) (Peptoclostridium difficile).